The chain runs to 496 residues: uncharacterized protein (496 aa).

Residues 1–19 form the signal peptide; that stretch reads MTTGYILIAAILILGGVIA. A helical transmembrane segment spans residues 45 to 67; the sequence is AVLVTILTGGLVSATTLAILFIA. The interval 113–137 is disordered; that stretch reads LETTRTDKKQVETQRDQAKKEKLKA.

The protein resides in the membrane. This is an uncharacterized protein from Nostoc sp. (strain PCC 7120 / SAG 25.82 / UTEX 2576).